We begin with the raw amino-acid sequence, 520 residues long: RNA-binding protein MEX3A (520 aa).

A disordered region spans residues 49–111; sequence GLGEPPAPTA…QPPTAPKGAS (63 aa). The segment covering 60 to 69 has biased composition (gly residues); the sequence is EDGGGGGGGA. Residues 73 to 91 are compositionally biased toward pro residues; that stretch reads PAAPPQPAPPPPPAAPPAA. KH domains lie at 132–193 and 223–284; these read TTEC…RREI and QVTI…REEI. Ser338 carries the post-translational modification Phosphoserine. Residues 412–461 are disordered; that stretch reads SSSSAKARAGPPGAHRSPATSAGPELAGLPRRPPGEPLQGFSKLGGGGLR. At Ser462 the chain carries Phosphoserine. The segment at 469–509 adopts an RING-type zinc-finger fold; that stretch reads CMVCFESEVTAALVPCGHNLFCMECAVRICERTDPECPVCH.

Post-translationally, phosphorylated. In terms of tissue distribution, highest levels found in fetal brain and testis. Detected also in thymus, salivary gland and uterus.

The protein resides in the cytoplasm. It localises to the nucleus. The protein localises to the P-body. Functionally, RNA binding protein, may be involved in post-transcriptional regulatory mechanisms. In Homo sapiens (Human), this protein is RNA-binding protein MEX3A (MEX3A).